A 275-amino-acid polypeptide reads, in one-letter code: NH(3)-dependent NAD(+) synthetase (275 aa).

Position 46–53 (46–53 (GISGGQDS)) interacts with ATP. Residue Asp-52 participates in Mg(2+) binding. Arg-140 provides a ligand contact to deamido-NAD(+). Thr-160 is an ATP binding site. Mg(2+) is bound at residue Glu-165. The deamido-NAD(+) site is built by Lys-173 and Asp-180. Residues Lys-189 and Thr-211 each contribute to the ATP site. Residue 260 to 261 (HK) coordinates deamido-NAD(+).

The protein belongs to the NAD synthetase family. As to quaternary structure, homodimer.

The enzyme catalyses deamido-NAD(+) + NH4(+) + ATP = AMP + diphosphate + NAD(+) + H(+). It participates in cofactor biosynthesis; NAD(+) biosynthesis; NAD(+) from deamido-NAD(+) (ammonia route): step 1/1. Catalyzes the ATP-dependent amidation of deamido-NAD to form NAD. Uses ammonia as a nitrogen source. The sequence is that of NH(3)-dependent NAD(+) synthetase from Escherichia coli O45:K1 (strain S88 / ExPEC).